A 146-amino-acid chain; its full sequence is Hemoglobin subunit beta (146 aa).

An N-acetylvaline modification is found at Val-1. A Globin domain is found at 2-146 (HLTGEEKAAV…VANALAHKYH (145 aa)). Thr-12 carries the phosphothreonine modification. Residue Ser-44 is modified to Phosphoserine. Lys-59 is subject to N6-acetyllysine. His-63 is a binding site for heme b. The residue at position 82 (Lys-82) is an N6-acetyllysine. His-92 is a heme b binding site. At Cys-93 the chain carries S-nitrosocysteine. Lys-144 carries the post-translational modification N6-acetyllysine.

This sequence belongs to the globin family. Heterotetramer of two alpha chains and two beta chains. As to expression, red blood cells.

Functionally, involved in oxygen transport from the lung to the various peripheral tissues. This Martes foina (Beech marten) protein is Hemoglobin subunit beta (HBB).